The primary structure comprises 317 residues: Ribosomal protein L11 methyltransferase (317 aa).

Residues T158, G179, D201, and N244 each coordinate S-adenosyl-L-methionine.

The protein belongs to the methyltransferase superfamily. PrmA family.

It localises to the cytoplasm. The enzyme catalyses L-lysyl-[protein] + 3 S-adenosyl-L-methionine = N(6),N(6),N(6)-trimethyl-L-lysyl-[protein] + 3 S-adenosyl-L-homocysteine + 3 H(+). Functionally, methylates ribosomal protein L11. This Streptococcus equi subsp. equi (strain 4047) protein is Ribosomal protein L11 methyltransferase.